The primary structure comprises 335 residues: GTPase Obg (335 aa).

Residues 1-158 (MFVDQITLEL…RLVELELKLI (158 aa)) form the Obg domain. The region spanning 159–334 (ADIGLVGFPN…LYDLFKSKLS (176 aa)) is the OBG-type G domain. Residues 165 to 172 (GFPNAGKS), 190 to 194 (FTTLH), 215 to 218 (DIPG), 285 to 288 (NKID), and 315 to 317 (SGL) contribute to the GTP site. Residues serine 172 and threonine 192 each coordinate Mg(2+).

Belongs to the TRAFAC class OBG-HflX-like GTPase superfamily. OBG GTPase family. Monomer. It depends on Mg(2+) as a cofactor.

The protein localises to the cytoplasm. An essential GTPase which binds GTP, GDP and possibly (p)ppGpp with moderate affinity, with high nucleotide exchange rates and a fairly low GTP hydrolysis rate. Plays a role in control of the cell cycle, stress response, ribosome biogenesis and in those bacteria that undergo differentiation, in morphogenesis control. This is GTPase Obg from Chlamydia trachomatis serovar A (strain ATCC VR-571B / DSM 19440 / HAR-13).